The chain runs to 475 residues: MEQNLTTERSETSSSRAGTASRTDKKVFVKTYGCQMNVYDSQRMADALAAEGYRATDVIEDADLVLLNTCHIREKAAEKVYSELGRIRVLKEERAKQGRETVVGVAGCVAQAEGREILRRAPAVDLVIGPQTYHRLPSVVTRARAGEKIVETEYAVEDKFDHLPAPERTAVRSRGVTAFLTVQEGCDKFCTFCVVPYTRGAEVSRPVAQIVAEAERLAEAGVRELTLLGQNVNAWHGEGPDGREWGLGRLLFRLAEIPGLDRLRYTTSHPRDMDEELIAAHRDLIKLMPYLHLPVQAGSDRILKAMNRKHTAADYLRLIERIRAARPDIAMSGDFIVGFPGETDRDFEDTMRIVRDVNYAQAFSFKYSPRPGTPGADMHDQVPDAVKDERLQRLQALLAEQQRAFGESLVGTEIDLLLEKPGRQAGQLVGRSPWLQPVIVEENAGQIGDIVRVRITSSGGHSLFCEPAGTARVAL.

The segment at Met1–Ala20 is disordered. The MTTase N-terminal domain occupies Lys25–Ala145. Positions 34, 70, 108, 186, 190, and 193 each coordinate [4Fe-4S] cluster. Residues Arg172–Ala404 form the Radical SAM core domain. The 63-residue stretch at Glu407–Gly469 folds into the TRAM domain.

It belongs to the methylthiotransferase family. MiaB subfamily. In terms of assembly, monomer. [4Fe-4S] cluster serves as cofactor.

The protein localises to the cytoplasm. The catalysed reaction is N(6)-dimethylallyladenosine(37) in tRNA + (sulfur carrier)-SH + AH2 + 2 S-adenosyl-L-methionine = 2-methylsulfanyl-N(6)-dimethylallyladenosine(37) in tRNA + (sulfur carrier)-H + 5'-deoxyadenosine + L-methionine + A + S-adenosyl-L-homocysteine + 2 H(+). Catalyzes the methylthiolation of N6-(dimethylallyl)adenosine (i(6)A), leading to the formation of 2-methylthio-N6-(dimethylallyl)adenosine (ms(2)i(6)A) at position 37 in tRNAs that read codons beginning with uridine. The polypeptide is tRNA-2-methylthio-N(6)-dimethylallyladenosine synthase (Chelativorans sp. (strain BNC1)).